Consider the following 342-residue polypeptide: Serine/threonine-protein kinase SAPK1 (342 aa).

One can recognise a Protein kinase domain in the interval 4-260; that stretch reads YEVMRDIGSG…IPEIKNHPWF (257 aa). ATP is bound by residues 10-18 and lysine 33; that span reads IGSGNFGVA. Aspartate 123 serves as the catalytic Proton acceptor. The tract at residues 253–342 is C-terminal; that stretch reads EIKNHPWFLK…ENSGDFVCAL (90 aa).

Belongs to the protein kinase superfamily. Ser/Thr protein kinase family. In terms of processing, phosphorylated. As to expression, expressed in leaf blades, leaf sheaths and roots. Expressed in shoots and roots of young seedlings.

It catalyses the reaction L-seryl-[protein] + ATP = O-phospho-L-seryl-[protein] + ADP + H(+). The enzyme catalyses L-threonyl-[protein] + ATP = O-phospho-L-threonyl-[protein] + ADP + H(+). Activated by phosphorylation in response to hyperosmotic stress within 5 minutes. Functionally, may play a role in signal transduction of hyperosmotic response. In Oryza sativa subsp. japonica (Rice), this protein is Serine/threonine-protein kinase SAPK1 (SAPK1).